Consider the following 109-residue polypeptide: Large ribosomal subunit protein uL22 (109 aa).

It belongs to the universal ribosomal protein uL22 family. As to quaternary structure, part of the 50S ribosomal subunit.

In terms of biological role, this protein binds specifically to 23S rRNA; its binding is stimulated by other ribosomal proteins, e.g. L4, L17, and L20. It is important during the early stages of 50S assembly. It makes multiple contacts with different domains of the 23S rRNA in the assembled 50S subunit and ribosome. Its function is as follows. The globular domain of the protein is located near the polypeptide exit tunnel on the outside of the subunit, while an extended beta-hairpin is found that lines the wall of the exit tunnel in the center of the 70S ribosome. The sequence is that of Large ribosomal subunit protein uL22 from Chromobacterium violaceum (strain ATCC 12472 / DSM 30191 / JCM 1249 / CCUG 213 / NBRC 12614 / NCIMB 9131 / NCTC 9757 / MK).